A 249-amino-acid chain; its full sequence is Isoprenyl transferase 1 (249 aa).

Residue D30 is part of the active site. D30 lines the Mg(2+) pocket. Residues 31-34, W35, R43, H47, and 75-77 each bind substrate; these read GNGR and STE. The active-site Proton acceptor is the N78. Residues W79, R81, R198, and 204–206 contribute to the substrate site; that span reads RMS. E217 contributes to the Mg(2+) binding site.

It belongs to the UPP synthase family. As to quaternary structure, homodimer. Mg(2+) serves as cofactor.

In terms of biological role, catalyzes the condensation of isopentenyl diphosphate (IPP) with allylic pyrophosphates generating different type of terpenoids. The polypeptide is Isoprenyl transferase 1 (Tropheryma whipplei (strain Twist) (Whipple's bacillus)).